The primary structure comprises 174 residues: Gamma-crystallin F (174 aa).

Beta/gamma crystallin 'Greek key' domains are found at residues 2–40 (GKIT…RVDS) and 41–83 (GCWM…RLIP). The segment at 84–87 (HTGS) is connecting peptide. Beta/gamma crystallin 'Greek key' domains are found at residues 88-128 (HRLR…NVLE) and 129-171 (GWWV…RRAV).

It belongs to the beta/gamma-crystallin family.

Functionally, crystallins are the dominant structural components of the vertebrate eye lens. The polypeptide is Gamma-crystallin F (CRYGF) (Bos taurus (Bovine)).